The sequence spans 54 residues: Potassium channel toxin alpha-KTx 14.1 (54 aa).

The signal sequence occupies residues 1–23 (MKIFFAILLILAVCSMAIWTVNG).

It belongs to the short scorpion toxin superfamily. Potassium channel inhibitor family. Alpha-KTx 14 subfamily. Probably has three disulfide bridges. Expressed by the venom gland.

The protein resides in the secreted. Functionally, potential blocker of potassium channels. In Olivierus martensii (Manchurian scorpion), this protein is Potassium channel toxin alpha-KTx 14.1.